A 278-amino-acid polypeptide reads, in one-letter code: MQIVLVSGLSGSGKSIATAVLEDVGYYCVDNLPLAMLQPLVEYLKQEGYARVAIAIDARSGASFAQLPQIAENLRAQGADLRVIFLEAKTLSLVKRFSETRRRHPLSSDTVSLPEAIQLERETLADVAPLAHRIDTSDLSASALRLWIKDLVGPDRSRITLLFESFGFKHGIPLDADLVFDVRCLPNPHYVEELRPFTGRDPGVREFLEASPDAMALLADIRGFVENWLPCFIRDHRAYLTVAIGCTGGRHRSVYFAETLAAAFQAREQVLVRHRELS.

Residue 8 to 15 (GLSGSGKS) participates in ATP binding. A GTP-binding site is contributed by 57 to 60 (DARS).

The protein belongs to the RapZ-like family.

Functionally, displays ATPase and GTPase activities. This chain is Nucleotide-binding protein Tbd_0529, found in Thiobacillus denitrificans (strain ATCC 25259 / T1).